We begin with the raw amino-acid sequence, 611 residues long: Dihydroxy-acid dehydratase (611 aa).

Mg(2+) is bound at residue aspartate 81. Cysteine 122 is a [2Fe-2S] cluster binding site. Residues aspartate 123 and lysine 124 each coordinate Mg(2+). The residue at position 124 (lysine 124) is an N6-carboxylysine. A [2Fe-2S] cluster-binding site is contributed by cysteine 195. Residue glutamate 491 coordinates Mg(2+). Serine 517 functions as the Proton acceptor in the catalytic mechanism.

This sequence belongs to the IlvD/Edd family. In terms of assembly, homodimer. Requires [2Fe-2S] cluster as cofactor. It depends on Mg(2+) as a cofactor.

The enzyme catalyses (2R)-2,3-dihydroxy-3-methylbutanoate = 3-methyl-2-oxobutanoate + H2O. It carries out the reaction (2R,3R)-2,3-dihydroxy-3-methylpentanoate = (S)-3-methyl-2-oxopentanoate + H2O. It participates in amino-acid biosynthesis; L-isoleucine biosynthesis; L-isoleucine from 2-oxobutanoate: step 3/4. It functions in the pathway amino-acid biosynthesis; L-valine biosynthesis; L-valine from pyruvate: step 3/4. Functions in the biosynthesis of branched-chain amino acids. Catalyzes the dehydration of (2R,3R)-2,3-dihydroxy-3-methylpentanoate (2,3-dihydroxy-3-methylvalerate) into 2-oxo-3-methylpentanoate (2-oxo-3-methylvalerate) and of (2R)-2,3-dihydroxy-3-methylbutanoate (2,3-dihydroxyisovalerate) into 2-oxo-3-methylbutanoate (2-oxoisovalerate), the penultimate precursor to L-isoleucine and L-valine, respectively. In Actinobacillus pleuropneumoniae serotype 3 (strain JL03), this protein is Dihydroxy-acid dehydratase.